The primary structure comprises 292 residues: Lipoyl synthase (292 aa).

Positions 38, 43, 49, 64, 68, 71, and 277 each coordinate [4Fe-4S] cluster. One can recognise a Radical SAM core domain in the interval 50 to 266 (WSKGTATFML…KNRAESLGFR (217 aa)).

This sequence belongs to the radical SAM superfamily. Lipoyl synthase family. The cofactor is [4Fe-4S] cluster.

Its subcellular location is the cytoplasm. The enzyme catalyses [[Fe-S] cluster scaffold protein carrying a second [4Fe-4S](2+) cluster] + N(6)-octanoyl-L-lysyl-[protein] + 2 oxidized [2Fe-2S]-[ferredoxin] + 2 S-adenosyl-L-methionine + 4 H(+) = [[Fe-S] cluster scaffold protein] + N(6)-[(R)-dihydrolipoyl]-L-lysyl-[protein] + 4 Fe(3+) + 2 hydrogen sulfide + 2 5'-deoxyadenosine + 2 L-methionine + 2 reduced [2Fe-2S]-[ferredoxin]. Its pathway is protein modification; protein lipoylation via endogenous pathway; protein N(6)-(lipoyl)lysine from octanoyl-[acyl-carrier-protein]: step 2/2. Functionally, catalyzes the radical-mediated insertion of two sulfur atoms into the C-6 and C-8 positions of the octanoyl moiety bound to the lipoyl domains of lipoate-dependent enzymes, thereby converting the octanoylated domains into lipoylated derivatives. In Chlorobium limicola (strain DSM 245 / NBRC 103803 / 6330), this protein is Lipoyl synthase.